The chain runs to 476 residues: Sulfate adenylyltransferase subunit 1 (476 aa).

Residues Lys24–Glu241 form the tr-type G domain. Positions Gly33 to Ser40 are G1. Gly33–Ser40 lines the GTP pocket. A G2 region spans residues Gly91–Asp95. The tract at residues Asp112–Gly115 is G3. Residues Asp112 to His116 and Asn167 to Asp170 contribute to the GTP site. The interval Asn167–Asp170 is G4. A G5 region spans residues Ser205 to Leu207.

Belongs to the TRAFAC class translation factor GTPase superfamily. Classic translation factor GTPase family. CysN/NodQ subfamily. Heterodimer composed of CysD, the smaller subunit, and CysN.

It catalyses the reaction sulfate + ATP + H(+) = adenosine 5'-phosphosulfate + diphosphate. Its pathway is sulfur metabolism; hydrogen sulfide biosynthesis; sulfite from sulfate: step 1/3. Functionally, with CysD forms the ATP sulfurylase (ATPS) that catalyzes the adenylation of sulfate producing adenosine 5'-phosphosulfate (APS) and diphosphate, the first enzymatic step in sulfur assimilation pathway. APS synthesis involves the formation of a high-energy phosphoric-sulfuric acid anhydride bond driven by GTP hydrolysis by CysN coupled to ATP hydrolysis by CysD. The polypeptide is Sulfate adenylyltransferase subunit 1 (Photobacterium profundum (strain SS9)).